Reading from the N-terminus, the 2622-residue chain is MAHAASQLKKNRDLEINAEEETEKKKKHRKRSRDRKKKSDANASYLRAARAGHLEKALDYIKNGVDVNICNQNGLNALHLASKEGHVEVVSELLQREANVDAATKKGNTALHIASLAGQAEVVKVLVTNGANVNAQSQNGFTPLYMAAQENHLEVVRFLLDNGASQSLATEDGFTPLAVALQQGHDQVVSLLLENDTKGKVRLPALHIAARKDDTKAAALLLQNDTNADIESKMVVNRATESGFTPLHIAAHYGNINVATLLLNRAAAVDFTARNDITPLHVASKRGNANMVKLLLDRGAKIDAKTRDGLTPLHCGARSGHEQVVEMLLDRAAPILSKTKNGLSPLHMATQGDHLNCVQLLLQHNVPVDDVTNDYLTALHVAAHCGHYKVAKVLLDKKANPNAKALNGFTPLHIACKKNRIRVMELLLKHGASIQAVTESGLTPIHVAAFMGHVNIVSQLMHHGASPNTTNVRGETALHMAARSGQAEVVRYLVQDGAQVEAKAKDDQTPLHISARLGKADIVQQLLQQGASPNAATTSGYTPLHLSAREGHEDVAAFLLDHGASLSITTKKGFTPLHVAAKYGKLEVASLLLQKSASPDAAGKSGLTPLHVAAHYDNQKVALLLLDQGASPHAAAKNGYTPLHIAAKKNQMDIATSLLEYGADANAVTRQGIASVHLAAQEGHVDMVSLLLSRNANVNLSNKSGLTPLHLAAQEDRVNVAEVLVNQGAHVDAQTKMGYTPLHVGCHYGNIKIVNFLLQHSAKVNAKTKNGYTPLHQAAQQGHTHIINVLLQNNASPNELTVNGNTALAIARRLGYISVVDTLKVVTEEIMTTTTITEKHKMNVPETMNEVLDMSDDEVGKASAPEKLSDGEYISDGEEGEDAITGDTDKYLGPQDLKELGDDSLPAEGYVGFSLGARSASLRSFSSDRSYTLNRSSYARDSMMIEELLVPSKEQHLPFTREFDSDSLRHYSWAADTLDNVNLVSSPVHSGFLVSFMVDARGGSMRGSRHHGMRIIIPPRKCTAPTRITCRLVKRHKLANPPPMVEGEGLASRLVEMGPAGAQFLGPVIVEIPHFGSMRGKERELIVLRSENGETWKEHQFDSKNEDLSELLNGMDEELDSPEELGTKRICRIITKDFPQYFAVVSRIKQESNQIGPEGGILSSTTVPLVQASFPEGALTKRIRVGLQAQPVPEETVKKILGNKATFSPIVTVEPRRRKFHKPITMTIPVPPPSGEGVSNGYKGDTTPSLRLLCSITGGTSPAQWEDITGTTPLTFIKDCVSFTTNVSARFWLADCHQVLETVGLASQLYRELICVPYMAKFVVFAKTNDPVESSLRCFCMTDDRVDKTLEQQENFEEVARSKDIEVLEGKPIYVDCYGNLAPLTKGGQQLVFNFYSFKENRLPFSIKVRDTSQEPCGRLSFLKEPKTTKGLPQTAVCNLNITLPAHKKAEKADRRQSFTSLALRKRYSYLTEPSMKTVERSSGTARSLPTTYSHKPFFSTRPYQSWTTTPITVPGPAKSGSLSSSPSNTPSASPLKSIWSVSTPSPIKSTLGASTTSSVKSISDVASPIRSFRTISSPIRTVASPSPYNTQVASGTLGRVPTITEATPIKGVAPNSTLSSRTSPVTTAGSLLEKSSITMTPPASPKANITMYSSSLPFKSIITSAAPLISSPLKSVVSPTKSAADVISTAKAAMASTLSSPLKQMSGHAEVALVNGSVSPLKYPSSSALINGCKATATLQDKISTATNAVSSVVSAAPDTVEKALSTTTAMPFSPLRSYVSAAAPSAFQSLRAPSASALYNSLGPSVGVTTSSVTSSIITVPVYSVGNVLAEPALKKLPDSNSLTKSAAALLSPIKTLTTETRPQPHFNRTSSPVKSSLFLASSALKPSVPSSLSSSQEILKDVAEMKEDLMRMTAILQTDVPEEKPFQTDLPREGRIDDEEPFKIVEKVKEDLVKVSEILKKDVCVESKGPPKSPKSDKGHSPEDDWTEFSSEEIREARQAAASHAPSLPERVHGKANLTRVIDYLTNDIGSSSLTNLKYKFEEAKKEGEERQKRILKPAMALQEHKLKMPPASMRPSTSEKELCKMADSFFGTDAILESPDDFSQHDQDKSPLSDSGFETRSEKTPSAPQSAESTGPKPLFHEVPIPPVITETRTEVVHVIRSYEPSTGEIPQSQPEDPVSPKPPPTFMELEPKPTALSIKEKVKAFQMKASSEEEDHSRVLSKGMRVKEETHITTTTRMVYHSPPGSECASERIEETMSVHDIMKAFQSGRDPSKELAGLFEHKSAMSPDVAKSAAETSAQHAEKDNQMKPKLERIIEVHIEKGPQSPCERTDIRMAIVADHLGLSWTELARELNFSVDEINQIRVENPNSLISQSFMLLKKWVTRDGKNATTDALTSVLTKINRIDIVTLLEGPIFDYGNISGTRSFADENNVFHDPVDGWQNETPSGSLESPAQARRITGGLLDRLDDSSDQVRDPITSYLTGEAGKFEANGNHAEVIPEAKAKAYFPESQNDIGKQSIKENLKPKTHGCGRAEEPVSPLTAYQKSLEETSKLVIEDAPKPCVPVGMKKMTRTPADGKARLNLQEEEGSARSEPKQGEGYKVKTKKEIRNVEKKAH.

The segment at 1–44 (MAHAASQLKKNRDLEINAEEETEKKKKHRKRSRDRKKKSDANAS) is disordered. Residues 25-38 (KKKHRKRSRDRKKK) are compositionally biased toward basic residues. Ser39 bears the Phosphoserine mark. ANK repeat units follow at residues 73–102 (NGLN…NVDA), 106–135 (KGNT…NVNA), 139–168 (NGFT…SQSL), 172–201 (DGFT…KGKV), 203–230 (LPAL…NADI), 242–271 (SGFT…AVDF), 275–304 (NDIT…KIDA), 308–337 (DGLT…PILS), 341–370 (NGLS…PVDD), 374–403 (DYLT…NPNA), 407–436 (NGFT…SIQA), 440–469 (SGLT…SPNT), 473–502 (RGET…QVEA), 506–535 (DDQT…SPNA), 539–568 (SGYT…SLSI), 572–601 (KGFT…SPDA), 605–634 (SGLT…SPHA), 638–667 (NGYT…DANA), 671–700 (QGIA…NVNL), 704–733 (SGLT…HVDA), 737–766 (MGYT…KVNA), 770–799 (NGYT…SPNE), and 803–832 (NGNT…EIMT). Ser631 is modified (phosphoserine). 10 positions are modified to phosphoserine: Val851, Ser855, Ser869, Ser875, Ser921, Ser924, Ser930, Ser965, Ser967, and Ser1121. The segment at 868–889 (LSDGEYISDGEEGEDAITGDTD) is disordered. Over residues 873-884 (YISDGEEGEDAI) the composition is skewed to acidic residues. ZU5 domains follow at residues 992-1147 (FLVS…VVSR) and 1149-1296 (KQES…LADC). Residues Ser1458 and Ser1469 each carry the phosphoserine modification. The tract at residues 1510–1539 (TPITVPGPAKSGSLSSSPSNTPSASPLKSI) is disordered. The segment covering 1515–1536 (PGPAKSGSLSSSPSNTPSASPL) has biased composition (low complexity). 7 positions are modified to phosphoserine: Ser1621, Ser1624, Ser1679, Ser1984, Ser2102, Ser2114, and Ser2117. 3 disordered regions span residues 1968-1992 (VESK…WTEF), 2099-2147 (ILES…FHEV), and 2292-2312 (SPDV…KDNQ). Positions 1977–1986 (PKSDKGHSPE) are enriched in basic and acidic residues. Residues 2106 to 2127 (FSQHDQDKSPLSDSGFETRSEK) are compositionally biased toward basic and acidic residues. Over residues 2128-2137 (TPSAPQSAES) the composition is skewed to polar residues. The 85-residue stretch at 2336–2420 (TDIRMAIVAD…DIVTLLEGPI (85 aa)) folds into the Death domain. 3 positions are modified to phosphoserine: Ser2457, Ser2475, and Ser2544. The interval 2568-2622 (CVPVGMKKMTRTPADGKARLNLQEEEGSARSEPKQGEGYKVKTKKEIRNVEKKAH) is disordered. Residues 2594–2622 (GSARSEPKQGEGYKVKTKKEIRNVEKKAH) show a composition bias toward basic and acidic residues.

As to quaternary structure, may be a constituent of a NFASC/NRCAM/ankyrin G complex. Interacts with RHBG. Directly interacts with DMD and betaDAG1; this interaction does not interfere with DMD-binding and is required for DMD and betaDAG1 retention at costameres. Interacts (via N-terminal ANK repeats) with SCHIP1 isoform 7 (via C-terminus); this interaction is required for the localization at axon initial segments (AISs) and nodes of Ranvier (NRs). Interacts with PLEC and FLNC. Interacts (via ANK repeats) with IQCJ-SCHIP1; required for IQCJ-SCHIP1 localization at axon initial segments (AIS) and nodes of Ranvier. Interacts with SCHIP1. Interacts with KCNA1; this inhibits channel activity. Interacts with SCN5A. Interacts with PKP2 and GJA1/CX43. In terms of assembly, interacts (via its C-terminal muscle-specific Obscurin/Titin-Binding-related domain sequence) with PLEC and FLNC. In terms of tissue distribution, expressed in the heart (at protein level). Expressed in skeletal muscle (at protein level). Expressed at highest levels in brain and testis, followed by skin, kidney, liver and spleen. As to expression, may be specifically expressed in muscle tissues, including heart and skeletal muscle (extensor digitorum longus) (at protein level). Expressed in skeletal muscle, brain, lung, heart, testes and kidney.

Its subcellular location is the cytoplasm. The protein resides in the cytoskeleton. The protein localises to the cell projection. It is found in the axon. It localises to the cell membrane. Its subcellular location is the sarcolemma. The protein resides in the postsynaptic cell membrane. The protein localises to the lysosome. It is found in the T-tubule. Functionally, membrane-cytoskeleton linker. May participate in the maintenance/targeting of ion channels and cell adhesion molecules at the nodes of Ranvier and axonal initial segments. In skeletal muscle, required for costamere localization of DMD and betaDAG1. Regulates KCNA1 channel activity in function of dietary Mg(2+) levels, and thereby contributes to the regulation of renal Mg(2+) reabsorption. Required for intracellular adhesion and junctional conductance in myocytes, potentially via stabilization of GJA1/CX43 protein abundance and promotion of PKP2, GJA1/CX43, and SCN5A/Nav1.5 localization to cell-cell junctions. This is Ankyrin-3 (Ank3) from Rattus norvegicus (Rat).